The following is a 412-amino-acid chain: Putative competence-damage inducible protein (412 aa).

It belongs to the CinA family.

This chain is Putative competence-damage inducible protein, found in Bacillus cereus (strain ATCC 14579 / DSM 31 / CCUG 7414 / JCM 2152 / NBRC 15305 / NCIMB 9373 / NCTC 2599 / NRRL B-3711).